Here is a 459-residue protein sequence, read N- to C-terminus: MSAGWFRRRFLPGEPLPAPRPPGPHASPVPYRRPRFLRGSSSSPGAADASRRPDSRPVRSPARGRTLPWNAGYAEIINAEKSEFNEDQAACGKLCIRRCEFGAEEEWLTLCPEEFLTGHYWALFDGHGGPAAAILAANTLHSCLRRQLEAVVEGLVATQPPMHLNGRCICPSDPQFVEEKGIRAEDLVIGALESAFQECDEVIGRELEASGQMGGCTALVAVSLQGKLYMANAGDSRAILVRRDEIRPLSFEFTPETERQRIQQLAFVYPELLAGEFTRLEFPRRLKGDDLGQKVLFRDHHMSGWSYKRVEKSDLKYPLIHGQGRQARLLGTLAVSRGLGDHQLRVLDTNIQLKPFLLSVPQVTVLDVDQLELQEDDVVVMATDGLWDVLSNEQVAWLVRSFLPGNQEDPHRFSKLAQMLIHSTQGKEDSLTEEGQVSYDDVSVFVIPLHSQGQESSDH.

Over residues 1–10 the composition is skewed to basic residues; that stretch reads MSAGWFRRRF. Residues 1–64 are disordered; the sequence is MSAGWFRRRF…SRPVRSPARG (64 aa). Pro residues predominate over residues 14 to 27; the sequence is EPLPAPRPPGPHAS. Positions 38–48 are enriched in low complexity; sequence RGSSSSPGAAD. The Mn(2+) site is built by Asp-125 and Gly-126. The PPM-type phosphatase domain maps to 162–459; it reads MHLNGRCICP…HSQGQESSDH (298 aa).

It belongs to the PP2C family. It depends on Mg(2+) as a cofactor. The cofactor is Mn(2+).

It is found in the nucleus. The catalysed reaction is O-phospho-L-seryl-[protein] + H2O = L-seryl-[protein] + phosphate. The enzyme catalyses O-phospho-L-threonyl-[protein] + H2O = L-threonyl-[protein] + phosphate. The protein is Protein phosphatase 1M (PPM1M) of Homo sapiens (Human).